The sequence spans 330 residues: Tryptophan--tRNA ligase (330 aa).

Residues 10 to 12 (QAT) and 18 to 19 (GN) each bind ATP. The 'HIGH' region signature appears at 11-19 (ATGSLHLGN). Aspartate 134 is a binding site for L-tryptophan. ATP-binding positions include 146 to 148 (GED), isoleucine 186, and 195 to 199 (KMSKS). Positions 195 to 199 (KMSKS) match the 'KMSKS' region motif.

This sequence belongs to the class-I aminoacyl-tRNA synthetase family. As to quaternary structure, homodimer.

It is found in the cytoplasm. It carries out the reaction tRNA(Trp) + L-tryptophan + ATP = L-tryptophyl-tRNA(Trp) + AMP + diphosphate + H(+). Catalyzes the attachment of tryptophan to tRNA(Trp). The sequence is that of Tryptophan--tRNA ligase from Rickettsia felis (strain ATCC VR-1525 / URRWXCal2) (Rickettsia azadi).